We begin with the raw amino-acid sequence, 252 residues long: F-box protein At5g39250 (252 aa).

The F-box domain occupies 1–42; sequence MFSEEVLKNVFPLLEGEDLASCMGVCKQWRDIARDDFYWKCQ.

This Arabidopsis thaliana (Mouse-ear cress) protein is F-box protein At5g39250.